The primary structure comprises 178 residues: Small ribosomal subunit protein uS4 (178 aa).

The 63-residue stretch at 104 to 166 (RRLQTIVYRK…PNSPMASENH (63 aa)) folds into the S4 RNA-binding domain. The interval 158–178 (NSPMASENHPERTAAVSEENQ) is disordered.

The protein belongs to the universal ribosomal protein uS4 family. Part of the 30S ribosomal subunit. Contacts protein S5. The interaction surface between S4 and S5 is involved in control of translational fidelity.

In terms of biological role, one of the primary rRNA binding proteins, it binds directly to 16S rRNA where it nucleates assembly of the body of the 30S subunit. With S5 and S12 plays an important role in translational accuracy. In Methanococcus maripaludis (strain C6 / ATCC BAA-1332), this protein is Small ribosomal subunit protein uS4.